The following is a 280-amino-acid chain: Urease accessory protein UreD 3 (280 aa).

It belongs to the UreD family. UreD, UreF and UreG form a complex that acts as a GTP-hydrolysis-dependent molecular chaperone, activating the urease apoprotein by helping to assemble the nickel containing metallocenter of UreC. The UreE protein probably delivers the nickel.

The protein resides in the cytoplasm. In terms of biological role, required for maturation of urease via the functional incorporation of the urease nickel metallocenter. The sequence is that of Urease accessory protein UreD 3 from Bradyrhizobium sp. (strain ORS 278).